The chain runs to 344 residues: Protein L-Myc-1-A (344 aa).

Disordered stretches follow at residues 100–162 and 209–261; these read RLTT…DDEI and PPEP…EDIV. Polar residues-rich tracts occupy residues 102–112, 123–133, and 236–255; these read TTASPRATNPQ, PGVNSIEQNAN, and PALQ…SGSS. The region spanning 261–313 is the bHLH domain; it reads VKKKNHNYLERKRRNDLRSRFLALREEVPSLTRSTKTPKVVVLSKATEFLKGL. Residues 313–341 form a leucine-zipper region; that stretch reads LVIQEQQLTAEKFKLWSRHQQLLRRISHL.

Efficient DNA binding requires dimerization with another bHLH protein. Binds DNA as a heterodimer with MAX. High levels in oocytes, modest levels in kidney and low levels in spleen.

It is found in the nucleus. The polypeptide is Protein L-Myc-1-A (mycl1-a) (Xenopus laevis (African clawed frog)).